A 435-amino-acid chain; its full sequence is Indole diterpene prenyltransferase atmD (435 aa).

L-tryptophan-binding positions include 81-82 (AY) and Glu-90. Arg-103, Lys-190, Arg-261, Lys-263, Tyr-265, Tyr-346, and Tyr-413 together coordinate substrate.

This sequence belongs to the tryptophan dimethylallyltransferase family.

Its function is as follows. Indole diterpene prenyltransferase; part of the ATM2 gene cluster that mediates the biosynthesis of aflatrem, a tremorgenic mycotoxin with acute neurotoxic effects. Synthesis of geranylgeranyl diphosphate (GGPP) by AtmG (a GGPP synthase) precedes condensation of GGPP with indole 3-glycerol phosphate, followed by epoxidation and cyclization by AtmM (a FAD-dependent monooxygenase) and AtmC (a prenyltransferase) to produce paspaline. AtmB is also essential for paspaline production, but its exact role has not been identified yet. AtmP, a cytochrome P450 monooxygenase, subsequently converts paspaline to 13-desoxypaxilline via PC-M6 by removal of the C-30 methyl group and oxidation at C-10. AtmQ, a cytochrome P450 monooxygenase, then catalyzes the oxidation of 13-desoxypaxilline, first at C-7 to produce paspalicine and then at C-13 to form paspalinine. Finally, AtmD prenylates paspalinine to form aflatrem. The sequence is that of Indole diterpene prenyltransferase atmD from Aspergillus flavus.